The sequence spans 998 residues: Mediator of RNA polymerase II transcription subunit 14 (998 aa).

This sequence belongs to the Mediator complex subunit 14 family. Component of the Mediator complex.

The protein localises to the nucleus. In terms of biological role, component of the Mediator complex, a coactivator involved in the regulated transcription of nearly all RNA polymerase II-dependent genes. Mediator functions as a bridge to convey information from gene-specific regulatory proteins to the basal RNA polymerase II transcription machinery. Mediator is recruited to promoters by direct interactions with regulatory proteins and serves as a scaffold for the assembly of a functional preinitiation complex with RNA polymerase II and the general transcription factors. In Kluyveromyces lactis (strain ATCC 8585 / CBS 2359 / DSM 70799 / NBRC 1267 / NRRL Y-1140 / WM37) (Yeast), this protein is Mediator of RNA polymerase II transcription subunit 14 (RGR1).